The sequence spans 213 residues: MSIIPLLHLARELDHDYRTDWGHLLEDDFGFGVHAHDLFHPRRLLLPNTLGLGRRRYSPYERSHGHHNQMSRRASGGPNALLPAVGKDGFQVCMDVSQFKPNELTVKVVDNTVVVEGKHEEREDGHGMIQRHFVRKYTLPKGFDPNEVVSTVSSDGVLTLKAPPPPSKEQAKSERIVQIQQTGPAHLSVKAPAPEAGDGKAENGSGEKMETSK.

Ser58 and Ser75 each carry phosphoserine. One can recognise a sHSP domain in the interval 71-182 (SRRASGGPNA…SERIVQIQQT (112 aa)). The disordered stretch occupies residues 157–213 (VLTLKAPPPPSKEQAKSERIVQIQQTGPAHLSVKAPAPEAGDGKAENGSGEKMETSK). Residues 197–213 (GDGKAENGSGEKMETSK) show a composition bias toward basic and acidic residues.

Belongs to the small heat shock protein (HSP20) family.

The chain is Heat shock protein 27 (Hsp27) from Drosophila melanogaster (Fruit fly).